The primary structure comprises 355 residues: Methionine import ATP-binding protein MetN (355 aa).

The ABC transporter domain occupies 8–250; the sequence is LKNIDITFTQ…PQEDLTQEFI (243 aa). 42–49 contributes to the ATP binding site; the sequence is GYSGAGKS.

It belongs to the ABC transporter superfamily. Methionine importer (TC 3.A.1.24) family. As to quaternary structure, the complex is composed of two ATP-binding proteins (MetN), two transmembrane proteins (MetI) and a solute-binding protein (MetQ).

It is found in the cell membrane. The catalysed reaction is L-methionine(out) + ATP + H2O = L-methionine(in) + ADP + phosphate + H(+). It catalyses the reaction D-methionine(out) + ATP + H2O = D-methionine(in) + ADP + phosphate + H(+). Its function is as follows. Part of the ABC transporter complex MetNIQ involved in methionine import. Responsible for energy coupling to the transport system. The chain is Methionine import ATP-binding protein MetN from Streptococcus thermophilus (strain CNRZ 1066).